The following is a 215-amino-acid chain: UPF0502 protein YceH (215 aa).

This sequence belongs to the UPF0502 family.

The polypeptide is UPF0502 protein YceH (Salmonella arizonae (strain ATCC BAA-731 / CDC346-86 / RSK2980)).